The following is a 351-amino-acid chain: 3-ketosteroid-9-alpha-monooxygenase, ferredoxin reductase component (351 aa).

An FAD-binding FR-type domain is found at 10–116 (SRSVILTVSA…LPPAGVFTPK (107 aa)). Residues 264 to 351 (ATVEVELDGE…PVTDHLKIEF (88 aa)) form the 2Fe-2S ferredoxin-type domain. Positions 300, 305, 308, and 338 each coordinate [2Fe-2S] cluster.

In terms of assembly, the two-component system 3-ketosteroid-9-alpha-monooxygenase is composed of an oxygenase component KshA and a reductase component KshB. It depends on FAD as a cofactor. [2Fe-2S] cluster is required as a cofactor.

It catalyses the reaction androsta-1,4-diene-3,17-dione + 2 reduced [2Fe-2S]-[ferredoxin] + O2 + 2 H(+) = 9alpha-hydroxyandrosta-1,4-diene-3,17-dione + 2 oxidized [2Fe-2S]-[ferredoxin] + H2O. Its pathway is steroid metabolism; cholesterol degradation. Its activity is regulated as follows. KSH activity is completely inhibited by zinc ions. KshB is specifically inhibited by Cu(2+) ions. In terms of biological role, probably involved in the degradation of cholesterol. In vitro, catalyzes the introduction of a 9alpha-hydroxyl moiety into the ring B of 3-ketosteroid substrates such as 1,4-androstadiene-3,17-dione (ADD), 4-androstene-3,17-dione (AD), 4-androstene-17beta-ol-3-one (testosterone), 4-pregnene-3,20-dione (progesterone), 19-nor-4-androstene-3,17-dione (nordion), 1-(5alpha)-androstene-3,17-dione, 5alpha-androstane-3,17-dione and 5beta-androstane-3,17-dione. KSH has the highest activity with 3-keto-Delta4 steroid substrates. This chain is 3-ketosteroid-9-alpha-monooxygenase, ferredoxin reductase component, found in Rhodococcus rhodochrous.